The sequence spans 493 residues: Adenylyltransferase and sulfurtransferase uba4 (493 aa).

ATP contacts are provided by residues G99, D120, 127–131 (SNLHR), K144, and 188–189 (DN). Positions 237 and 240 each coordinate Zn(2+). The active-site Glycyl thioester intermediate; for adenylyltransferase activity is the C254. The Zn(2+) site is built by C316 and C319. In terms of domain architecture, Rhodanese spans 376-491 (INKEPTIIDV…WREQIDPDWP (116 aa)). C446 serves as the catalytic Cysteine persulfide intermediate; for sulfurtransferase activity.

It in the N-terminal section; belongs to the HesA/MoeB/ThiF family. UBA4 subfamily. Zn(2+) serves as cofactor.

Its subcellular location is the cytoplasm. It is found in the cytosol. The catalysed reaction is [molybdopterin-synthase sulfur-carrier protein]-C-terminal Gly-Gly + ATP + H(+) = [molybdopterin-synthase sulfur-carrier protein]-C-terminal Gly-Gly-AMP + diphosphate. The enzyme catalyses [molybdopterin-synthase sulfur-carrier protein]-C-terminal Gly-Gly-AMP + S-sulfanyl-L-cysteinyl-[cysteine desulfurase] + AH2 = [molybdopterin-synthase sulfur-carrier protein]-C-terminal-Gly-aminoethanethioate + L-cysteinyl-[cysteine desulfurase] + A + AMP + 2 H(+). It participates in tRNA modification; 5-methoxycarbonylmethyl-2-thiouridine-tRNA biosynthesis. It functions in the pathway cofactor biosynthesis; molybdopterin biosynthesis. Its function is as follows. Plays a central role in 2-thiolation of mcm(5)S(2)U at tRNA wobble positions of cytosolic tRNA(Lys), tRNA(Glu) and tRNA(Gln). Also essential during biosynthesis of the molybdenum cofactor. Acts by mediating the C-terminal thiocarboxylation of sulfur carriers urm1 and mocs2a. Its N-terminus first activates urm1 and mocs2a as acyl-adenylates (-COAMP), then the persulfide sulfur on the catalytic cysteine is transferred to urm1 and mocs2a to form thiocarboxylation (-COSH) of their C-terminus. The reaction probably involves hydrogen sulfide that is generated from the persulfide intermediate and that acts as a nucleophile towards urm1 and mocs2a. Subsequently, a transient disulfide bond is formed. Does not use thiosulfate as sulfur donor; nfs1 probably acting as a sulfur donor for thiocarboxylation reactions. The polypeptide is Adenylyltransferase and sulfurtransferase uba4 (Aspergillus fumigatus (strain ATCC MYA-4609 / CBS 101355 / FGSC A1100 / Af293) (Neosartorya fumigata)).